The chain runs to 519 residues: Probable FAD synthase (519 aa).

The molybdenum cofactor biosynthesis protein-like stretch occupies residues 17–108 (AILVIGDEIL…TDQMQFSDEI (92 aa)). Residues 328–485 (QIALSFNGGK…SLGGRDNTVK (158 aa)) form an FAD synthase region.

In the N-terminal section; belongs to the MoaB/Mog family. The protein in the C-terminal section; belongs to the PAPS reductase family. FAD1 subfamily. Requires Mg(2+) as cofactor.

The enzyme catalyses FMN + ATP + H(+) = FAD + diphosphate. It functions in the pathway cofactor biosynthesis; FAD biosynthesis; FAD from FMN: step 1/1. In terms of biological role, catalyzes the adenylation of flavin mononucleotide (FMN) to form flavin adenine dinucleotide (FAD) coenzyme. This is Probable FAD synthase from Caenorhabditis elegans.